The sequence spans 192 residues: Phosphoheptose isomerase (192 aa).

The 157-residue stretch at 36–192 (CVDSLAAGGK…DQVEAVAAPA (157 aa)) folds into the SIS domain. 51–53 (NGG) contacts substrate. Zn(2+) is bound by residues H60 and E64. Substrate-binding positions include E64, 93–94 (ND), 119–121 (TTS), S124, and Q171. Residues Q171 and H179 each coordinate Zn(2+).

The protein belongs to the SIS family. GmhA subfamily. As to quaternary structure, homotetramer. Zn(2+) serves as cofactor.

The protein localises to the cytoplasm. The enzyme catalyses 2 D-sedoheptulose 7-phosphate = D-glycero-alpha-D-manno-heptose 7-phosphate + D-glycero-beta-D-manno-heptose 7-phosphate. Its pathway is carbohydrate biosynthesis; D-glycero-D-manno-heptose 7-phosphate biosynthesis; D-glycero-alpha-D-manno-heptose 7-phosphate and D-glycero-beta-D-manno-heptose 7-phosphate from sedoheptulose 7-phosphate: step 1/1. Catalyzes the isomerization of sedoheptulose 7-phosphate in D-glycero-D-manno-heptose 7-phosphate. This chain is Phosphoheptose isomerase, found in Paramagnetospirillum magneticum (strain ATCC 700264 / AMB-1) (Magnetospirillum magneticum).